A 312-amino-acid polypeptide reads, in one-letter code: tRNA-dihydrouridine(16) synthase (312 aa).

FMN-binding positions include 7–9 and Gln68; that span reads PMQ. Cys98 (proton donor) is an active-site residue. Residues Lys139, 200-202, and 224-225 each bind FMN; these read NGE and GR.

It belongs to the Dus family. DusC subfamily. The cofactor is FMN.

It catalyses the reaction 5,6-dihydrouridine(16) in tRNA + NADP(+) = uridine(16) in tRNA + NADPH + H(+). The enzyme catalyses 5,6-dihydrouridine(16) in tRNA + NAD(+) = uridine(16) in tRNA + NADH + H(+). In terms of biological role, catalyzes the synthesis of 5,6-dihydrouridine (D), a modified base found in the D-loop of most tRNAs, via the reduction of the C5-C6 double bond in target uridines. Specifically modifies U16 in tRNAs. In Pasteurella multocida (strain Pm70), this protein is tRNA-dihydrouridine(16) synthase.